A 525-amino-acid polypeptide reads, in one-letter code: NGFI-A-binding protein 2 (525 aa).

The segment at 1-22 is disordered; sequence MHRAPSPTAEQPPGGGDSARRT. The residue at position 6 (Ser-6) is a Phosphoserine. The interval 35-113 is NCD1; that stretch reads ALPRTLGELQ…REWATNPGLF (79 aa). The disordered stretch occupies residues 135–237; it reads GTRKGSMSNG…GGTGGGPDRL (103 aa). Ser-157, Ser-159, Ser-162, and Ser-171 each carry phosphoserine. Residues 212–234 are compositionally biased toward gly residues; sequence AGGGVPEGTGAGGLAAGGTGGGP. Residues 267 to 356 form an NCD2 region; it reads LLKLNKKLAR…SRQVARESTY (90 aa). The tract at residues 353–384 is necessary for nuclear localization; sequence ESTYLSSLKGSRLHPEELGGPPLKKLKQEVGE. Residue Lys-379 forms a Glycyl lysine isopeptide (Lys-Gly) (interchain with G-Cter in SUMO1) linkage. Residues 380 to 416 are disordered; the sequence is QEVGEQSHPEIQQPPPGPESYVPPYRPSLEEDSASLS. Phosphoserine is present on Ser-479. The interval 502–525 is disordered; it reads PGPHPALVEGRRSSVKVEAEASRQ. Residues 510–525 show a composition bias toward basic and acidic residues; sequence EGRRSSVKVEAEASRQ. A Glycyl lysine isopeptide (Lys-Gly) (interchain with G-Cter in SUMO1); alternate cross-link involves residue Lys-517. Lys-517 participates in a covalent cross-link: Glycyl lysine isopeptide (Lys-Gly) (interchain with G-Cter in SUMO2); alternate.

It belongs to the NAB family. In terms of assembly, homomultimers may associate with EGR1 bound to DNA. Post-translationally, sumoylation by EGR2 represses EGR2 transcriptional activity in hindbrain. In terms of tissue distribution, widely expressed at low levels. Highly expressed in melanoma cell lines.

Its subcellular location is the nucleus. Functionally, acts as a transcriptional repressor for zinc finger transcription factors EGR1 and EGR2. Isoform 2 lacks repression ability. The protein is NGFI-A-binding protein 2 (NAB2) of Homo sapiens (Human).